The sequence spans 82 residues: Small ribosomal subunit protein bS16 (82 aa).

This sequence belongs to the bacterial ribosomal protein bS16 family.

The chain is Small ribosomal subunit protein bS16 from Mannheimia succiniciproducens (strain KCTC 0769BP / MBEL55E).